Consider the following 202-residue polypeptide: Cytochrome c oxidase assembly protein CtaG (202 aa).

Residues 1 to 14 (MSENAGTPKKQGRN) lie on the Cytoplasmic side of the membrane. Residues 15-37 (NGAVVMMCLSFVFGMGAMSYAAV) form a helical; Signal-anchor for type II membrane protein membrane-spanning segment. Topologically, residues 38–202 (PLYRIFCQVT…GGAEKIEKKL (165 aa)) are periplasmic.

This sequence belongs to the COX11/CtaG family.

Its subcellular location is the cell inner membrane. In terms of biological role, exerts its effect at some terminal stage of cytochrome c oxidase synthesis, probably by being involved in the insertion of the copper B into subunit I. The polypeptide is Cytochrome c oxidase assembly protein CtaG (Rhizobium johnstonii (strain DSM 114642 / LMG 32736 / 3841) (Rhizobium leguminosarum bv. viciae)).